Consider the following 191-residue polypeptide: MPKYVRRKEVLEVLKVHYQTLYRMEEKGLIEVKRTNGGHRLYNLEKYLRDNGLDNKEKKGICYCRVSSKKQIKDLNRQVEYMEKNYPEYEIIKDIGSGINMERKGLLQLIQMAIDGEISEVVVTYKDRLARFGFELIEWIIKTYSNGQIKIIHKREEETPEEEITRDILQIMNVYVAKINGKKSGKLKAKK.

The H-T-H motif DNA-binding region spans 11 to 30 (LEVLKVHYQTLYRMEEKGLI). The Resolvase/invertase-type recombinase catalytic domain maps to 59-191 (KGICYCRVSS…KKSGKLKAKK (133 aa)). The stretch at 65-91 (RVSSKKQIKDLNRQVEYMEKNYPEYEI) forms a coiled coil. The active-site O-(5'-phospho-DNA)-serine intermediate is the Ser67.

Belongs to the site-specific recombinase resolvase family.

Functionally, resolvase catalyzes the resolution (a site-specific recombination) of the cointegrated replicon to yield the final transposition products. In Acanthamoeba polyphaga (Amoeba), this protein is Putative resolvase L103.